Reading from the N-terminus, the 181-residue chain is Calmodulin-like protein 6 (181 aa).

EF-hand domains are found at residues 33–68 (EQIK…LGIN), 69–104 (PTKS…YHEK), 107–142 (NQES…AGEP), and 143–178 (LNEV…ESFK). Residues aspartate 156, aspartate 158, aspartate 160, threonine 162, and glutamate 167 each coordinate Ca(2+).

Belongs to the calmodulin family. Calglandulin subfamily. As to expression, expressed in prostate, thymus, heart, skeleton muscle, bone marrow and ovary.

Its subcellular location is the cytoplasm. The protein localises to the nucleus. The sequence is that of Calmodulin-like protein 6 (CALML6) from Homo sapiens (Human).